A 143-amino-acid chain; its full sequence is Small ribosomal subunit protein bS6 (143 aa).

Positions 98–143 (TEQSLIMKSKDEKGDKPERSERRRRDDEEGEAPAANDNDGDNAEAA) are disordered. The segment covering 105-124 (KSKDEKGDKPERSERRRRDD) has biased composition (basic and acidic residues).

The protein belongs to the bacterial ribosomal protein bS6 family.

In terms of biological role, binds together with bS18 to 16S ribosomal RNA. The protein is Small ribosomal subunit protein bS6 of Xanthomonas euvesicatoria pv. vesicatoria (strain 85-10) (Xanthomonas campestris pv. vesicatoria).